The chain runs to 948 residues: Probable disease resistance protein At5g47260 (948 aa).

Residues 20-57 (RKYLYNLERNLEALHKVMQDLNAMRNDLLKRLSKEEEI) adopt a coiled-coil conformation. Positions 134-432 (HRALPPLVIK…CEGILAKEDR (299 aa)) constitute an NB-ARC domain. Residue 176–183 (GRGGVGKT) coordinates ATP. 9 LRR repeats span residues 498-519 (MIRR…PQCS), 520-542 (ELTT…FFQW), 545-567 (GLVV…VSSL), 569-591 (LLRF…KELK), 592-614 (SLIH…ASLL), 615-636 (NLQV…EDIQ), 640-661 (SLKE…LSIQ), 666-686 (SIRR…LSLN), and 690-711 (SLCE…WRCT).

Belongs to the disease resistance NB-LRR family.

Functionally, potential disease resistance protein. This chain is Probable disease resistance protein At5g47260, found in Arabidopsis thaliana (Mouse-ear cress).